The following is a 641-amino-acid chain: Toxin TseL (641 aa).

Interacts with VgrG3; this interaction allows TseL secretion to target cells.

It localises to the secreted. In terms of biological role, toxin secreted by the type VI (T6SS) secretion system that acts on prokaryotic as well as eukaryotic target cells. The sequence is that of Toxin TseL from Vibrio cholerae serotype O1 (strain ATCC 39315 / El Tor Inaba N16961).